The primary structure comprises 477 residues: uncharacterized protein (477 aa).

12 helical membrane passes run 31 to 51 (LLRL…LLGT), 60 to 80 (LGVP…VAPF), 103 to 123 (LWFG…SLIL), 130 to 150 (MGPA…AGVG), 177 to 197 (LLYV…GWLL), 205 to 225 (LIRV…IALW), 248 to 268 (AWGL…VMVG), 291 to 311 (VGQT…GFIW), 334 to 354 (IVAF…LFFA), 359 to 379 (IGLG…MVVV), 384 to 404 (GIAL…AVFI), and 433 to 453 (VVYV…GPLV).

This sequence belongs to the PucC family.

Its subcellular location is the cell membrane. This is an uncharacterized protein from Rhodobacter capsulatus (Rhodopseudomonas capsulata).